Reading from the N-terminus, the 809-residue chain is Leucine--tRNA ligase (809 aa).

Positions 40–50 match the 'HIGH' region motif; sequence PYPSGRIHMGH. The 'KMSKS' region signature appears at 579–583; it reads KMSKS. Residue K582 participates in ATP binding.

This sequence belongs to the class-I aminoacyl-tRNA synthetase family.

It is found in the cytoplasm. The enzyme catalyses tRNA(Leu) + L-leucine + ATP = L-leucyl-tRNA(Leu) + AMP + diphosphate. The polypeptide is Leucine--tRNA ligase (Campylobacter jejuni subsp. doylei (strain ATCC BAA-1458 / RM4099 / 269.97)).